We begin with the raw amino-acid sequence, 139 residues long: Translation initiation factor 2 subunit beta (139 aa).

It belongs to the eIF-2-beta/eIF-5 family. In terms of assembly, heterotrimer composed of an alpha, a beta and a gamma chain.

Its function is as follows. eIF-2 functions in the early steps of protein synthesis by forming a ternary complex with GTP and initiator tRNA. The chain is Translation initiation factor 2 subunit beta from Sulfurisphaera tokodaii (strain DSM 16993 / JCM 10545 / NBRC 100140 / 7) (Sulfolobus tokodaii).